The chain runs to 507 residues: Maturase K (507 aa).

The protein belongs to the intron maturase 2 family. MatK subfamily.

The protein resides in the plastid. The protein localises to the chloroplast. Functionally, usually encoded in the trnK tRNA gene intron. Probably assists in splicing its own and other chloroplast group II introns. This Browningia hertlingiana (Cactus) protein is Maturase K.